Consider the following 285-residue polypeptide: uncharacterized protein (285 aa).

Residues 107–285 form the ATP-grasp domain; sequence FLTVDTTIFD…KHHLKRQMIP (179 aa).

This is an uncharacterized protein from Mycoplasma pneumoniae (strain ATCC 29342 / M129 / Subtype 1) (Mycoplasmoides pneumoniae).